The sequence spans 623 residues: Chaperone protein HtpG (623 aa).

Residues 1-341 form an a; substrate-binding region; sequence MEKREFKAES…SQDLSLNISR (341 aa). Positions 342–549 are b; that stretch reads EMLQHDRQLS…EGEVSIEMEK (208 aa). Residues 550–623 are c; sequence ILSAMPNNQG…FTNDICKLMK (74 aa).

The protein belongs to the heat shock protein 90 family. Homodimer.

Its subcellular location is the cytoplasm. In terms of biological role, molecular chaperone. Has ATPase activity. The chain is Chaperone protein HtpG from Clostridium perfringens (strain 13 / Type A).